Reading from the N-terminus, the 292-residue chain is Zinc metalloproteinase nas-3 (292 aa).

The N-terminal stretch at 1-16 (MYRFIIFFSLLALTAS) is a signal peptide. The region spanning 56–249 (RGIAIHPWQW…RNINTLYKCN (194 aa)) is the Peptidase M12A domain. 2 disulfides stabilise this stretch: cysteine 103–cysteine 248 and cysteine 128–cysteine 158. Histidine 169 serves as a coordination point for Zn(2+). The active site involves glutamate 170. Residues histidine 173 and histidine 179 each contribute to the Zn(2+) site.

The cofactor is Zn(2+).

It is found in the secreted. Functionally, metalloprotease. The sequence is that of Zinc metalloproteinase nas-3 (nas-3) from Caenorhabditis elegans.